Reading from the N-terminus, the 100-residue chain is Small ribosomal subunit protein bS18c (100 aa).

Positions 81–100 (KQFERTESTPRTTGPRTRKK) are disordered. The segment covering 89–100 (TPRTTGPRTRKK) has biased composition (low complexity).

The protein belongs to the bacterial ribosomal protein bS18 family. As to quaternary structure, part of the 30S ribosomal subunit.

It localises to the plastid. The protein localises to the chloroplast. The chain is Small ribosomal subunit protein bS18c from Nandina domestica (Heavenly bamboo).